A 469-amino-acid chain; its full sequence is UDP-N-acetylmuramate--L-alanine ligase (469 aa).

Position 114–120 (114–120) interacts with ATP; sequence GTHGKTT.

This sequence belongs to the MurCDEF family.

It localises to the cytoplasm. It carries out the reaction UDP-N-acetyl-alpha-D-muramate + L-alanine + ATP = UDP-N-acetyl-alpha-D-muramoyl-L-alanine + ADP + phosphate + H(+). The protein operates within cell wall biogenesis; peptidoglycan biosynthesis. In terms of biological role, cell wall formation. In Sinorhizobium fredii (strain NBRC 101917 / NGR234), this protein is UDP-N-acetylmuramate--L-alanine ligase.